The following is a 365-amino-acid chain: Peptide chain release factor 2 (365 aa).

Residue glutamine 251 is modified to N5-methylglutamine.

Belongs to the prokaryotic/mitochondrial release factor family. In terms of processing, methylated by PrmC. Methylation increases the termination efficiency of RF2.

It is found in the cytoplasm. In terms of biological role, peptide chain release factor 2 directs the termination of translation in response to the peptide chain termination codons UGA and UAA. This is Peptide chain release factor 2 from Aliarcobacter butzleri (strain RM4018) (Arcobacter butzleri).